Reading from the N-terminus, the 176-residue chain is ATP synthase subunit b (176 aa).

Residues 26-45 (VINLAIIIGVLVYFGRGLLG) form a helical membrane-spanning segment.

Belongs to the ATPase B chain family. In terms of assembly, F-type ATPases have 2 components, F(1) - the catalytic core - and F(0) - the membrane proton channel. F(1) has five subunits: alpha(3), beta(3), gamma(1), delta(1), epsilon(1). F(0) has four main subunits: a(1), b(1), b'(1) and c(10-14). The alpha and beta chains form an alternating ring which encloses part of the gamma chain. F(1) is attached to F(0) by a central stalk formed by the gamma and epsilon chains, while a peripheral stalk is formed by the delta, b and b' chains.

The protein resides in the cellular thylakoid membrane. Functionally, f(1)F(0) ATP synthase produces ATP from ADP in the presence of a proton or sodium gradient. F-type ATPases consist of two structural domains, F(1) containing the extramembraneous catalytic core and F(0) containing the membrane proton channel, linked together by a central stalk and a peripheral stalk. During catalysis, ATP synthesis in the catalytic domain of F(1) is coupled via a rotary mechanism of the central stalk subunits to proton translocation. In terms of biological role, component of the F(0) channel, it forms part of the peripheral stalk, linking F(1) to F(0). The protein is ATP synthase subunit b of Synechococcus sp. (strain PCC 6716).